The chain runs to 435 residues: Adenylosuccinate synthetase (435 aa).

Residues Gly20–Lys26 and Gly48–Thr50 contribute to the GTP site. The Proton acceptor role is filled by Asp21. Mg(2+) is bound by residues Asp21 and Gly48. Residues Asp21–Lys24, Asn46–His49, Thr134, Arg148, Gln229, Thr244, and Arg308 contribute to the IMP site. His49 serves as the catalytic Proton donor. Substrate is bound at residue Thr304–Arg310. GTP contacts are provided by residues Arg310, Lys336–Asp338, and Ser422–Gly424.

This sequence belongs to the adenylosuccinate synthetase family. Homodimer. It depends on Mg(2+) as a cofactor.

It localises to the cytoplasm. The enzyme catalyses IMP + L-aspartate + GTP = N(6)-(1,2-dicarboxyethyl)-AMP + GDP + phosphate + 2 H(+). Its pathway is purine metabolism; AMP biosynthesis via de novo pathway; AMP from IMP: step 1/2. Its function is as follows. Plays an important role in the de novo pathway of purine nucleotide biosynthesis. Catalyzes the first committed step in the biosynthesis of AMP from IMP. The protein is Adenylosuccinate synthetase of Thermoplasma acidophilum (strain ATCC 25905 / DSM 1728 / JCM 9062 / NBRC 15155 / AMRC-C165).